A 319-amino-acid polypeptide reads, in one-letter code: 8-methylmenaquinol:fumarate reductase iron-sulfur subunit (319 aa).

Residues 1-96 (MKFIIDRFDG…TFRISPLGNH (96 aa)) form the 2Fe-2S ferredoxin-type domain. [2Fe-2S] cluster contacts are provided by Cys51, Cys56, Cys59, and Cys71. 4Fe-4S ferredoxin-type domains are found at residues 139–168 (FDRIIKQWDCILCGSCVSECNKFSADQSDY) and 193–224 (VKPAVANGLWNCVHCHECTNRCPKHISAAEDI). Residues Cys148, Cys151, Cys154, Cys158, Cys204, Cys207, Cys210, and Cys214 each coordinate [4Fe-4S] cluster.

The protein belongs to the succinate dehydrogenase/fumarate reductase iron-sulfur protein family. The MFR complex is composed of three subunits: a flavoprotein (SdhA), an iron-sulfur protein (SdhB), and one hydrophobic anchor protein (SdhE). It depends on [2Fe-2S] cluster as a cofactor. [4Fe-4S] cluster serves as cofactor.

Its subcellular location is the periplasm. The protein resides in the cell membrane. The enzyme catalyses 8-methylmenaquinone-6 + succinate = 8-methylmenaquinol-6 + fumarate. In terms of biological role, iron-sulfur subunit of 8-methylmenaquinol:fumarate reductase (MFR), that catalyzes the reduction of fumarate using 8-methylmenaquinol-6 as electron donor. The complex shows no succinate oxidation activity. Is involved in anaerobic metabolism. The chain is 8-methylmenaquinol:fumarate reductase iron-sulfur subunit from Wolinella succinogenes (strain ATCC 29543 / DSM 1740 / CCUG 13145 / JCM 31913 / LMG 7466 / NCTC 11488 / FDC 602W) (Vibrio succinogenes).